A 200-amino-acid polypeptide reads, in one-letter code: Chromophore lyase CpcS/CpeS (200 aa).

Belongs to the CpcS/CpeS biliprotein lyase family.

Its function is as follows. Covalently attaches a chromophore to Cys residue(s) of phycobiliproteins. The polypeptide is Chromophore lyase CpcS/CpeS (Synechococcus sp. (strain WH8020)).